Reading from the N-terminus, the 658-residue chain is Transcription factor cep-1 (658 aa).

Residues E238 to R428 mediate DNA binding. Zn(2+) is bound by residues C319, H322, C375, and C379. The disordered stretch occupies residues Q450–S477. Residues T466–S476 show a composition bias toward low complexity. The segment at Q535–I564 is required for tertiary structure stability of the protein.

The protein belongs to the p53 family. Homodimer. Interacts (via C-terminus domain) with prmt-5; not methylated by prmt-5. Interacts with cbp-1 (via HAT domain); cep-1 transcriptional activity may be inhibited by interaction with methylated cbp-1. Component of a complex that contains prmt-5 and cbp-1. Interacts with ape-1; the interaction inhibits pro-apoptotic activity of cep-1. Zn(2+) serves as cofactor. Phosphorylated in response to IR-induced DNA damage which is thought to be mediated by akt-1.

It localises to the nucleus. Functionally, transcriptional activator that binds the same DNA consensus sequence as p53. Has a role in normal development to ensure proper meiotic chromosome segregation. Promotes apoptosis under conditions of cellular and genotoxic stress in response to DNA damage, hypoxia, or starvation. However, not required for DNA repair in response to UV-C or to regulate cell-cycle progression. Regulates germline apoptosis in response to DNA damage. Required for induction of ced-13 in response to DNA damage. Its pro-apoptotic activity is inhibited when bound to ape-1 in vitro. Regulates germline proliferation by activating phg-1. Regulates DNA damage-induced apoptosis by inducing transcription of the programmed cell death activator egl-1. Negatively regulates lifespan. This is Transcription factor cep-1 from Caenorhabditis briggsae.